A 797-amino-acid polypeptide reads, in one-letter code: Speckle targeted PIP5K1A-regulated poly(A) polymerase (797 aa).

The Matrin-type zinc-finger motif lies at 14 to 44 (FHCNLCHVNIPNRPSLEDHVKGKKHLHLLRL). In terms of domain architecture, RRM spans 54–126 (NSVFVSGFKA…LKLRVKPREK (73 aa)). Serine 205 contributes to the ATP binding site. Residues aspartate 216 and aspartate 218 each coordinate Mg(2+). Residues aspartate 216, aspartate 218, asparagine 319, arginine 341, tyrosine 363, and histidine 495 each contribute to the UTP site. Asparagine 319 provides a ligand contact to ATP. In terms of domain architecture, PAP-associated spans 421–495 (DLCTLLFGFF…NVLDPFELNH (75 aa)). Residues 544–787 (QSEAAASSQP…FLPKMAETIM (244 aa)) form a KA1; binds the bulging loops of U6 snRNA but is dispensable for terminal uridylyltransferase activity region. The tract at residues 611-659 (EETQSLDKTDKSGSEMEVNNNRSLEDTNIQVKGEAGKKRPLSVEEGPST) is disordered. The span at 615 to 624 (SLDKTDKSGS) shows a compositional bias: basic and acidic residues. Residues 627-640 (EVNNNRSLEDTNIQ) show a composition bias toward polar residues.

It belongs to the DNA polymerase type-B-like family. In terms of assembly, associates with the cleavage and polyadenylation specificity factor (CPSF) complex. Requires Mg(2+) as cofactor. Mn(2+) serves as cofactor.

The protein localises to the nucleus. Its subcellular location is the nucleolus. It is found in the nucleus speckle. It catalyses the reaction RNA(n) + UTP = RNA(n)-3'-uridine ribonucleotide + diphosphate. The enzyme catalyses RNA(n) + ATP = RNA(n)-3'-adenine ribonucleotide + diphosphate. Poly(A) polymerase that creates the 3'-poly(A) tail of specific pre-mRNAs. In addition to polyadenylation, it is also required for the 3'-end cleavage of pre-mRNAs: binds to the 3'UTR of targeted pre-mRNAs and promotes the recruitment and assembly of the CPSF complex on the 3'UTR of pre-mRNAs. In addition to adenylyltransferase activity, also has uridylyltransferase activity. However, the ATP ratio is higher than UTP in cells, suggesting that it functions primarily as a poly(A) polymerase. The chain is Speckle targeted PIP5K1A-regulated poly(A) polymerase (tut1) from Danio rerio (Zebrafish).